Consider the following 475-residue polypeptide: FAD-dependent monooxygenase spyC (475 aa).

Positions 1–24 are cleaved as a signal peptide; the sequence is MTAKPPFKVIIVGGSIAGLTLAHC. Positions 36, 50, 109, 310, and 323 each coordinate FAD. Residues 444 to 464 traverse the membrane as a helical segment; the sequence is LLIPFLYPVVAFSLCVLAWIG.

The protein belongs to the paxM FAD-dependent monooxygenase family. FAD serves as cofactor.

The protein localises to the membrane. The enzyme catalyses (2E,6E,10E)-geranylgeranyl-triacetate lactone + AH2 + O2 = (S)-(2E,6E,10E)-epoxygeranylgeranyl-triacetate lactone + A + H2O. The protein operates within secondary metabolite biosynthesis; terpenoid biosynthesis. In terms of biological role, FAD-dependent monooxygenase spyC; part of the gene cluster that mediates the biosynthesis of meroterpenoids called sartorypyrones. Within the pathway, spyC catalyzes the epoxidation of geranylgeranyl-triacetate lactone at the terminal olein to yield epoxygeranylgeranyl-triacetate lactone. The biosynthesis of sartorypyrones begins with the production of triacetic acid lactone (TAL) by the NR-PKS spyA using one molecule of acetyl-CoA and two molecules of malonyl-CoA. The prenyltransferase spyF then conjugates geranylgeranyl pyrophosphate (GGPP) to TAL to form geranylgeranyl-triacetate lactone, for which the pathway-specific geranylgeranyl pyrophosphate synthase (GGPS) spyE is required to provide GGPP. Subsequently, geranylgeranyl-triacetate lactone is epoxidized at the terminal olein by the FAD-dependent monooxygenase spyC, followed by cyclization of the terpenoid component catalyzed by the terpene cyclase spyD to produce both the bicyclic sartorypyrone F and the monocyclic sartorypyrone D. Finally, the last step of the biosynthesis involves the acetylation of the meroterpenoids sartorypyrones D and F by the acetyltransferase SpyB to produce sartorypyrones A and G, respectively. The chain is FAD-dependent monooxygenase spyC from Aspergillus fumigatus (strain ATCC MYA-4609 / CBS 101355 / FGSC A1100 / Af293) (Neosartorya fumigata).